We begin with the raw amino-acid sequence, 464 residues long: Protein FAM90A15 (464 aa).

Disordered regions lie at residues 1 to 42, 70 to 389, and 415 to 437; these read MMAR…DPRL, PATL…HDGA, and HSPE…SEAP. Basic and acidic residues-rich tracts occupy residues 74–89 and 97–114; these read GKKE…KPRV and NKDK…DPQR. Residues 180–197 show a composition bias toward low complexity; that stretch reads LASLSPLRKASLSSSSSL.

Belongs to the FAM90 family.

In Homo sapiens (Human), this protein is Protein FAM90A15.